Reading from the N-terminus, the 248-residue chain is Mitochondrial import inner membrane translocase subunit Tim21 (248 aa).

Residues 1-18 (MICTFLRAVQYTEKLHRS) constitute a mitochondrion transit peptide. The disordered stretch occupies residues 67-98 (TQGPSPRKAKEDGSKQVSVHRSQRGGTAVPTS). A helical membrane pass occupies residues 108–128 (FTYLIVVLFGISITGGLFYTI).

It belongs to the TIM21 family. As to quaternary structure, component of the TIM23 complex. Component of the MITRAC (mitochondrial translation regulation assembly intermediate of cytochrome c oxidase complex) complex, the core components of this complex being COA3/MITRAC12 and COX14. Interacts with COA3 and MT-CO1/COX1.

Its subcellular location is the mitochondrion membrane. In terms of biological role, participates in the translocation of transit peptide-containing proteins across the mitochondrial inner membrane. Also required for assembly of mitochondrial respiratory chain complex I and complex IV as component of the MITRAC (mitochondrial translation regulation assembly intermediate of cytochrome c oxidase complex) complex. Probably shuttles between the presequence translocase and respiratory-chain assembly intermediates in a process that promotes incorporation of early nuclear-encoded subunits into these complexes. The polypeptide is Mitochondrial import inner membrane translocase subunit Tim21 (TIMM21) (Homo sapiens (Human)).